The following is a 334-amino-acid chain: HTH-type transcriptional regulator RegA (334 aa).

Positions 1-57 constitute an HTH lacI-type domain; it reads MAASIKDVAREARVSIATVSRVLNNVDVVNEETKKKVMEAIKKLDYRPNIVARSLKT. The H-T-H motif DNA-binding region spans 5–24; it reads IKDVAREARVSIATVSRVLN.

Its function is as follows. Involved in the regulation of amylase production. In Clostridium acetobutylicum (strain ATCC 824 / DSM 792 / JCM 1419 / IAM 19013 / LMG 5710 / NBRC 13948 / NRRL B-527 / VKM B-1787 / 2291 / W), this protein is HTH-type transcriptional regulator RegA (regA).